A 178-amino-acid polypeptide reads, in one-letter code: Extracellular fatty acid-binding protein (178 aa).

A signal peptide spans 1 to 20 (MRTLALSLALALLCLLHTEA). A21 bears the Blocked amino end (Ala) mark. T43 lines the enterobactin pocket. Residues Y72 and K104 each contribute to the 1-tetradecanoyl-sn-glycerol 3-phosphate site. C80 and C173 are joined by a disulfide. 3 residues coordinate enterobactin: K104, R123, and R134. Residue 134 to 136 (RLY) participates in 1-tetradecanoyl-sn-glycerol 3-phosphate binding.

This sequence belongs to the calycin superfamily. Lipocalin family. Monomer. Does not seem to be glycosylated. As to expression, expressed in egg white (at protein level). Expressed in the magnum of the oviduct (at protein level). Preferentially synthesized in nonproliferating cells.

It localises to the secreted. In terms of biological role, siderocalin-like lipocalin tightly binding a variety of bacterial ferric siderophores, also binds long-chain unsaturated fatty acids such as linoleic acid, oleic acid, arachidonic acid and, with a lower affinity, long chain saturated fatty acids such as steraic acid. May act as an antibacterial factor, through dual ligand specificity, both as a siderophore-sequestrating molecule and a lysophosphatidic acid (LPA) sensor. In Gallus gallus (Chicken), this protein is Extracellular fatty acid-binding protein (EXFABP).